Consider the following 512-residue polypeptide: Colistin resistance protein EmrB (512 aa).

14 consecutive transmembrane segments (helical) span residues 17–37, 55–75, 84–104, 115–135, 144–164, 169–189, 205–225, 234–254, 280–300, 314–334, 341–361, 376–396, 412–432, and 486–506; these read WAIFAAMIFGNFMAILDIQIV, VTWVQTVYLIAEIIAIPMSSI, VYYTMCAIGFTVSSLLCALSW, IQGFMGGGMIPTSMTALYLLF, LVMFGMISTLGPAIGPTIGGW, FSWHWMFLINIIPGIIIATVI, SMDWFSLVGMAMFLGGLEYFL, LADTGVRIAFMVCVVGGMIFF, ITTFVIGMALYGLGYMIPVFL, VMMVTGIVMFCFAPFLAWLIP, TVFVGMILAGFGVWLNSHLSI, GIGLMICLIVVSHLAMSTLPL, IGGAVGLALINSSLDWLTAMH, and FNDLLRMLAIIMFVTAFLTIF.

It belongs to the major facilitator superfamily. EmrB family.

It localises to the cell inner membrane. Its function is as follows. Probably part of an efflux pump system that contributes to adaptation to osmotic stress and resistance to colistin. This chain is Colistin resistance protein EmrB, found in Acinetobacter baumannii (strain ATCC 17978 / DSM 105126 / CIP 53.77 / LMG 1025 / NCDC KC755 / 5377).